The sequence spans 429 residues: UDP-N-acetylglucosamine 1-carboxyvinyltransferase (429 aa).

Residue 22 to 23 participates in phosphoenolpyruvate binding; that stretch reads KN. Position 102 (Arg102) interacts with UDP-N-acetyl-alpha-D-glucosamine. Cys126 serves as the catalytic Proton donor. The residue at position 126 (Cys126) is a 2-(S-cysteinyl)pyruvic acid O-phosphothioketal. UDP-N-acetyl-alpha-D-glucosamine-binding positions include 171-174, Asp316, and Ile338; that span reads KVSV.

The protein belongs to the EPSP synthase family. MurA subfamily.

The protein localises to the cytoplasm. The catalysed reaction is phosphoenolpyruvate + UDP-N-acetyl-alpha-D-glucosamine = UDP-N-acetyl-3-O-(1-carboxyvinyl)-alpha-D-glucosamine + phosphate. It participates in cell wall biogenesis; peptidoglycan biosynthesis. Functionally, cell wall formation. Adds enolpyruvyl to UDP-N-acetylglucosamine. The chain is UDP-N-acetylglucosamine 1-carboxyvinyltransferase from Xanthobacter autotrophicus (strain ATCC BAA-1158 / Py2).